The following is a 459-amino-acid chain: DNA polymerase subunit gamma-2 (459 aa).

In terms of assembly, heterotrimer composed of a catalytic subunit and a homodimer of accessory subunits (POLG:POLG2).

It localises to the mitochondrion. It is found in the mitochondrion matrix. Its subcellular location is the mitochondrion nucleoid. Its function is as follows. Accessory subunit of DNA polymerase gamma solely responsible for replication of mitochondrial DNA (mtDNA). Acts as an allosteric regulator of the holoenzyme activities. Enhances the polymerase activity and the processivity of POLG by increasing its interactions with the DNA template. Suppresses POLG exonucleolytic proofreading especially toward homopolymeric templates bearing mismatched termini. Binds to single-stranded DNA. The chain is DNA polymerase subunit gamma-2 (Polg2) from Mus musculus (Mouse).